Here is a 936-residue protein sequence, read N- to C-terminus: Protein translocase subunit SecA (936 aa).

ATP is bound by residues Gln87, 105 to 109 (GEGKT), and Asp515. Positions 920, 922, 931, and 932 each coordinate Zn(2+).

Belongs to the SecA family. In terms of assembly, monomer and homodimer. Part of the essential Sec protein translocation apparatus which comprises SecA, SecYEG and auxiliary proteins SecDF-YajC and YidC. Zn(2+) serves as cofactor.

Its subcellular location is the cell inner membrane. The protein localises to the cytoplasm. It carries out the reaction ATP + H2O + cellular proteinSide 1 = ADP + phosphate + cellular proteinSide 2.. Its function is as follows. Part of the Sec protein translocase complex. Interacts with the SecYEG preprotein conducting channel. Has a central role in coupling the hydrolysis of ATP to the transfer of proteins into and across the cell membrane, serving both as a receptor for the preprotein-SecB complex and as an ATP-driven molecular motor driving the stepwise translocation of polypeptide chains across the membrane. This is Protein translocase subunit SecA from Paraburkholderia phymatum (strain DSM 17167 / CIP 108236 / LMG 21445 / STM815) (Burkholderia phymatum).